The sequence spans 239 residues: 1-(5-phosphoribosyl)-5-[(5-phosphoribosylamino)methylideneamino] imidazole-4-carboxamide isomerase (239 aa).

Asp-8 serves as the catalytic Proton acceptor. Asp-129 serves as the catalytic Proton donor.

Belongs to the HisA/HisF family.

It is found in the cytoplasm. The enzyme catalyses 1-(5-phospho-beta-D-ribosyl)-5-[(5-phospho-beta-D-ribosylamino)methylideneamino]imidazole-4-carboxamide = 5-[(5-phospho-1-deoxy-D-ribulos-1-ylimino)methylamino]-1-(5-phospho-beta-D-ribosyl)imidazole-4-carboxamide. It functions in the pathway amino-acid biosynthesis; L-histidine biosynthesis; L-histidine from 5-phospho-alpha-D-ribose 1-diphosphate: step 4/9. In Roseobacter denitrificans (strain ATCC 33942 / OCh 114) (Erythrobacter sp. (strain OCh 114)), this protein is 1-(5-phosphoribosyl)-5-[(5-phosphoribosylamino)methylideneamino] imidazole-4-carboxamide isomerase.